The sequence spans 100 residues: Small ribosomal subunit protein uS14c (100 aa).

Residues 1–31 (MAKKSLIQREKKRQKLEQKYHSIRRSSKKEI) form a disordered region.

Belongs to the universal ribosomal protein uS14 family. As to quaternary structure, part of the 30S ribosomal subunit.

The protein localises to the plastid. It localises to the chloroplast. Binds 16S rRNA, required for the assembly of 30S particles. This chain is Small ribosomal subunit protein uS14c, found in Atropa belladonna (Belladonna).